The primary structure comprises 306 residues: MTNEFLHFEKISRQTWQSLHRKTTPPLTEEELESIKSFNDQISLQDVTDIYLPLAHLIQIYKRTKEDLAFSKGIFLQRESKSQPFIIGVSGSVAVGKSTTSRLLQILLSRTFTDATVELVTTDGFLYPNQTLIEQGILNRKGFPESYDMEALLNFLDRIKNGQDVDIPVYSHEVYDIVPEEKQSVKAADFVIVEGINVFQNPQNDRLYITDFFDFSIYVDAGVDDIESWYLDRFLKMLSLAQNDPDSYYYRFTQMPIGEVESFAHQVWISINLTNLQNYIEPTRNRAEVILHKSKNHEIDEIYLKK.

Position 91–98 (91–98) interacts with ATP; the sequence is GSVAVGKS.

This sequence belongs to the prokaryotic pantothenate kinase family.

Its subcellular location is the cytoplasm. The catalysed reaction is (R)-pantothenate + ATP = (R)-4'-phosphopantothenate + ADP + H(+). Its pathway is cofactor biosynthesis; coenzyme A biosynthesis; CoA from (R)-pantothenate: step 1/5. This Streptococcus pneumoniae serotype 4 (strain ATCC BAA-334 / TIGR4) protein is Pantothenate kinase (coaA).